The primary structure comprises 310 residues: Upstream stimulatory factor 1 (310 aa).

The segment covering 1–17 (MKGQQKTAETEEGTVQI) has biased composition (polar residues). 2 disordered regions span residues 1–26 (MKGQ…ATGE) and 171–209 (QGGS…EVER). Residues 194–209 (TTRDEKRRAQHNEVER) show a composition bias toward basic and acidic residues. Residues 199–254 (KRRAQHNEVERRRRDKINNWIVQLSKIIPDCSMESTKSGQSKGGILSKACDYIQEL) form the bHLH domain. The tract at residues 271-292 (LQLDNDVLRQQVEDLKNKNLLL) is leucine-zipper. A Glycyl lysine isopeptide (Lys-Gly) (interchain with G-Cter in SUMO2) cross-link involves residue K306.

In terms of assembly, efficient DNA binding requires dimerization with another bHLH protein. Binds DNA as a homodimer or a heterodimer (USF1/USF2).

The protein localises to the nucleus. Transcription factor that binds to a symmetrical DNA sequence (E-boxes) (5'-CACGTG-3') that is found in a variety of viral and cellular promoters. Regulates the expression of the surfactant protein-A (SP-A) gene. This is Upstream stimulatory factor 1 (USF1) from Oryctolagus cuniculus (Rabbit).